Here is a 762-residue protein sequence, read N- to C-terminus: Endonuclease MutS2 (762 aa).

An ATP-binding site is contributed by 329–336; sequence GPNTGGKT. A Smr domain is found at 682–757; it reads LNLIGKDVET…GSGVTVVYLE (76 aa).

The protein belongs to the DNA mismatch repair MutS family. MutS2 subfamily. Homodimer. Binds to stalled ribosomes, contacting rRNA.

Functionally, endonuclease that is involved in the suppression of homologous recombination and thus may have a key role in the control of bacterial genetic diversity. Acts as a ribosome collision sensor, splitting the ribosome into its 2 subunits. Detects stalled/collided 70S ribosomes which it binds and splits by an ATP-hydrolysis driven conformational change. Acts upstream of the ribosome quality control system (RQC), a ribosome-associated complex that mediates the extraction of incompletely synthesized nascent chains from stalled ribosomes and their subsequent degradation. Probably generates substrates for RQC. The chain is Endonuclease MutS2 from Aquifex aeolicus (strain VF5).